The chain runs to 368 residues: MKILVLGATGSIGKQAIDVICQLKYQLVGFSYYQNHNEANNILKQLNPNYVLCHSDPKYNKNVKSDLIELIDKSKPKVIINAINGYHGIEASLIALSKKKDLLLANKESLVIAGSQLEAIRKDTKTTIYPIDSEHSALYDLLKDKKKNQIKQLMITASGAGYFNKDISELRKLTYNDLLNHPNWKMGAEISINSATFVNKVYEIVEAYHLFKIKDIIPVVERSSTIHAGVIYQDNSIHFHATTNDMRWAIQSALTKFDNRTNVVQSLDLYQKTIQFEKIDFEQYPIFKIAYDILKNPYTTRGAVLTCINEHVVKLFQKQKINFLQITELISNFYWNYQHKKIDNIWQINDLIFKIKAAISSKYAYLDK.

NADPH-binding residues include Thr9, Gly10, Ser11, Ile12, Asn35, and Asn106. Lys107 is a binding site for 1-deoxy-D-xylulose 5-phosphate. NADPH is bound at residue Glu108. Residue Asp132 coordinates Mn(2+). Positions 133, 134, 158, and 181 each coordinate 1-deoxy-D-xylulose 5-phosphate. Glu134 provides a ligand contact to Mn(2+). An NADPH-binding site is contributed by Gly187. Positions 194, 199, 200, and 203 each coordinate 1-deoxy-D-xylulose 5-phosphate. A Mn(2+)-binding site is contributed by Glu203.

Belongs to the DXR family. It depends on Mg(2+) as a cofactor. Mn(2+) serves as cofactor.

It carries out the reaction 2-C-methyl-D-erythritol 4-phosphate + NADP(+) = 1-deoxy-D-xylulose 5-phosphate + NADPH + H(+). It participates in isoprenoid biosynthesis; isopentenyl diphosphate biosynthesis via DXP pathway; isopentenyl diphosphate from 1-deoxy-D-xylulose 5-phosphate: step 1/6. Its function is as follows. Catalyzes the NADPH-dependent rearrangement and reduction of 1-deoxy-D-xylulose-5-phosphate (DXP) to 2-C-methyl-D-erythritol 4-phosphate (MEP). This Mycoplasmoides gallisepticum (strain R(low / passage 15 / clone 2)) (Mycoplasma gallisepticum) protein is 1-deoxy-D-xylulose 5-phosphate reductoisomerase.